Here is an 813-residue protein sequence, read N- to C-terminus: Receptor-like protein 48 (813 aa).

The signal sequence occupies residues 1–30; that stretch reads MHSCSERRMMTVIWSLCLIFCLSNSILAIA. At 31 to 786 the chain is on the extracellular side; sequence KDLCLPDQRD…EDEEKEEKNQ (756 aa). Residues asparagine 69, asparagine 105, and asparagine 123 are each glycosylated (N-linked (GlcNAc...) asparagine). 3 LRR repeats span residues 111–134, 136–159, and 160–182; these read LQHLQSLELSSNNISGILPDSIGN, KYLRSLSFRTCHLFGKIPSSLGSL, and SYLTHLDLSYNDFTSEGPDSGGN. Residues asparagine 195 and asparagine 216 are each glycosylated (N-linked (GlcNAc...) asparagine). LRR repeat units lie at residues 196-219, 220-244, 245-260, 261-285, 288-310, 311-335, 336-359, 361-381, 382-405, 406-432, 434-450, 451-473, 475-498, 500-521, 523-544, 545-571, 572-595, 642-666, 667-690, 691-714, and 716-739; these read LSSVTWIDLGSNQLKGMLPSNMSS, LSKLVSFDISENSFSGSIPSSLFMI, PSLNFSGPLEIGNISS, HSELGYLYMGENNFNGPIPGSLSKL, LRDLSLSFWNTGRGIVDFSIFLH, LKSLCSLDLSYLNTRSMVDLSFFSH, LMSLDELDLSGINLKISSTLSFPS, TGTLILASCNIVEFPKFLENQ, TSLFYLDISANHIEGQVPEWLWRL, PTLSFVNIAQNSFSGELPMLPNSIYSF, ASDNQFSGEIPRTVCEL, VSLNTLVLSNNKFSGSIPRCFEN, KTISILHLRNNSLSGVFPKEIISE, LTSLDVGHNWLSGQLPKSLIKC, DLEFLNVEDNRINDKFPFWLRS, LSNLQILVLRSNEFYGPIFSLEDSLSF, PKLRIFDISENHFTGVLPSDYFAG, FTIYKTIDVSGNRLEGDIPESIGIL, KELIVLNMSNNAFTGHIPPSLSNL, SNLQSLDLSQNRLSGSIPPELGKL, and FLEWMNFSYNRLEGPIPQATQIQS. Residues asparagine 248 and asparagine 257 are each glycosylated (N-linked (GlcNAc...) asparagine). N-linked (GlcNAc...) asparagine glycosylation is present at asparagine 380. Asparagine 484 carries an N-linked (GlcNAc...) asparagine glycan. N-linked (GlcNAc...) asparagine glycans are attached at residues asparagine 673 and asparagine 689. N-linked (GlcNAc...) asparagine glycans are attached at residues asparagine 721 and asparagine 741. The disordered stretch occupies residues 756-785; that stretch reads FLNKCGGEEEEEEEATKQEEDEDEEKEEKN. Over residues 763 to 781 the composition is skewed to acidic residues; sequence EEEEEEEATKQEEDEDEEK. Residues 787–807 form a helical membrane-spanning segment; that stretch reads VFSWIAAAIGYVPGVFCGLTI. The Cytoplasmic segment spans residues 808 to 813; the sequence is AHILTS.

This sequence belongs to the RLP family.

The protein resides in the cell membrane. Its function is as follows. Plays a role in root hair development. This chain is Receptor-like protein 48, found in Arabidopsis thaliana (Mouse-ear cress).